A 332-amino-acid polypeptide reads, in one-letter code: D-lactate dehydrogenase (332 aa).

Residues R155–I156, D175, V206–P207, N212, F233–R235, and D259 contribute to the NAD(+) site. The active site involves R235. E264 is a catalytic residue. The active-site Proton donor is H296.

Belongs to the D-isomer specific 2-hydroxyacid dehydrogenase family.

The enzyme catalyses (R)-lactate + NAD(+) = pyruvate + NADH + H(+). The polypeptide is D-lactate dehydrogenase (ldhD) (Lactiplantibacillus plantarum (strain ATCC BAA-793 / NCIMB 8826 / WCFS1) (Lactobacillus plantarum)).